The sequence spans 533 residues: 1-aminocyclopropane-1-carboxylate synthase 5 (533 aa).

Lysine 358 is subject to N6-(pyridoxal phosphate)lysine.

It belongs to the class-I pyridoxal-phosphate-dependent aminotransferase family. Pyridoxal 5'-phosphate is required as a cofactor. In terms of tissue distribution, expressed in shoots and leaf blades. Expressed at low levels in leaf sheaths. Expressed in vasculature of roots and shoots.

The enzyme catalyses S-adenosyl-L-methionine = 1-aminocyclopropane-1-carboxylate + S-methyl-5'-thioadenosine + H(+). Its pathway is alkene biosynthesis; ethylene biosynthesis via S-adenosyl-L-methionine; ethylene from S-adenosyl-L-methionine: step 1/2. Functionally, catalyzes the formation of 1-aminocyclopropane-1-carboxylate, a direct precursor of ethylene in higher plants. This chain is 1-aminocyclopropane-1-carboxylate synthase 5, found in Oryza sativa subsp. japonica (Rice).